The primary structure comprises 255 residues: Phosphate import ATP-binding protein PstB (255 aa).

The ABC transporter domain occupies Ile8–Ile250. Gly40 to Ser47 serves as a coordination point for ATP.

Belongs to the ABC transporter superfamily. Phosphate importer (TC 3.A.1.7) family. In terms of assembly, the complex is composed of two ATP-binding proteins (PstB), two transmembrane proteins (PstC and PstA) and a solute-binding protein (PstS).

The protein localises to the cell inner membrane. The enzyme catalyses phosphate(out) + ATP + H2O = ADP + 2 phosphate(in) + H(+). Part of the ABC transporter complex PstSACB involved in phosphate import. Responsible for energy coupling to the transport system. The chain is Phosphate import ATP-binding protein PstB from Pelagibacter ubique (strain HTCC1062).